Reading from the N-terminus, the 449-residue chain is Metacaspase-1 (449 aa).

Residues 1 to 132 form a disordered region; the sequence is MFPGQGRHTY…YSRPPTNQQS (132 aa). Low complexity predominate over residues 10–26; sequence YGGQQQLLQLQQYNYGP. Positions 27–55 are enriched in pro residues; it reads PQGPPPNGYGPPPGPPPNGYGPPPGPPPQ. Positions 56–66 are enriched in polar residues; that stretch reads NSWGYGNPSGT. Composition is skewed to low complexity over residues 67–91 and 98–112; these read QSSN…YQRP and QSGN…NGEP. Polar residues predominate over residues 119-132; the sequence is GSGQYSRPPTNQQS. Active-site residues include His-232 and Cys-293.

Belongs to the peptidase C14B family.

Its function is as follows. Involved in cell death (apoptosis). This chain is Metacaspase-1 (MCA1), found in Lodderomyces elongisporus (strain ATCC 11503 / CBS 2605 / JCM 1781 / NBRC 1676 / NRRL YB-4239) (Yeast).